Here is a 413-residue protein sequence, read N- to C-terminus: RING-H2 finger protein ATL54 (413 aa).

Residues 83 to 103 traverse the membrane as a helical segment; sequence ISIITITGAVLAILLTGFFLV. The RING-type; atypical zinc-finger motif lies at 177-219; that stretch reads CPVCLNEFEEDESLRLLPKCNHAFHISCIDTWLSSHTNCPLCR. 2 disordered regions span residues 238–258 and 321–413; these read VTPGGSGSHLENDGVDEEDHG and THVE…VFPL. Over residues 387–401 the composition is skewed to low complexity; it reads SSSTLKTNGSSSSVS. The segment covering 402 to 413 has biased composition (polar residues); sequence CFNKNKSSVFPL.

This sequence belongs to the RING-type zinc finger family. ATL subfamily.

Its subcellular location is the membrane. The catalysed reaction is S-ubiquitinyl-[E2 ubiquitin-conjugating enzyme]-L-cysteine + [acceptor protein]-L-lysine = [E2 ubiquitin-conjugating enzyme]-L-cysteine + N(6)-ubiquitinyl-[acceptor protein]-L-lysine.. It participates in protein modification; protein ubiquitination. This is RING-H2 finger protein ATL54 (ATL54) from Arabidopsis thaliana (Mouse-ear cress).